The chain runs to 351 residues: Foldase protein PrsA 1 (351 aa).

Residues 1 to 22 form the signal peptide; that stretch reads MKNSNKLIASVVTLASVMALAA. Cys23 carries N-palmitoyl cysteine lipidation. Cys23 carries S-diacylglycerol cysteine lipidation. Residues 145–240 form the PpiC domain; that stretch reads TPTMAVEMIT…KKFYIVKVTK (96 aa). Low complexity-rich tracts occupy residues 303-317 and 326-351; these read KTKAASESSTTSESS and ESEQTQTSSAEEPTETEAQTQEPAAQ. The segment at 303 to 351 is disordered; sequence KTKAASESSTTSESSKAAEENPSESEQTQTSSAEEPTETEAQTQEPAAQ.

It belongs to the PrsA family.

The protein resides in the cell membrane. The catalysed reaction is [protein]-peptidylproline (omega=180) = [protein]-peptidylproline (omega=0). Plays a major role in protein secretion by helping the post-translocational extracellular folding of several secreted proteins. This is Foldase protein PrsA 1 (prsA1) from Streptococcus pyogenes serotype M1.